The chain runs to 216 residues: MAAPAPAPRILVLLLLLLPAPEGAQSELCMISHGRKVDPWVCPDFCCGNCNDQYCCSDVLKQVMWIEEDCHAPEASILTDDFDSGFDSDPVARFGTVIAIGVTLFVIAVVTVIVCCTCSCCCLYKMCRRPQPVVTTTMATTVTHTPYLQPPSYPGPTYQGYHSVVPQPGMPTAPYPTQPTGPPAYHETMAGGAALPYPASQPPYNPAYMEPPKAVP.

A signal peptide spans 1 to 26 (MAAPAPAPRILVLLLLLLPAPEGAQS). Residues 27–93 (ELCMISHGRK…SGFDSDPVAR (67 aa)) are Extracellular-facing. A helical transmembrane segment spans residues 94–114 (FGTVIAIGVTLFVIAVVTVIV). Residues 115–216 (CCTCSCCCLY…AYMEPPKAVP (102 aa)) are Cytoplasmic-facing.

It belongs to the shisa family. In terms of assembly, interacts with PDCD6; PDCD6 can stabilize SHISA5.

It localises to the endoplasmic reticulum membrane. The protein localises to the nucleus membrane. Can induce apoptosis in a caspase-dependent manner and plays a role in p53/TP53-dependent apoptosis. This chain is Protein shisa-5 (SHISA5), found in Bos taurus (Bovine).